A 376-amino-acid chain; its full sequence is MATVALPDWTRAVVKVGSALVAPDDRGCSTTHLLPIARFVIQSRRQGKEVILVSSGAVAAGLAEQGRGGPGTGLSIPERQALAALGQPLLMAHWRRLFDVPCAQVLLTYDDLQRRARFVNAKNTIAELLDRDTLPIVNENDTVATEELRVGDNDNLAAYVAVLAEADLLVICSDVDGLYTADPHDDPDAERLPAVDAITDEIYDMVGPSHRKVATGGMQTKVEAAEKATDRGIDTVLVNGTKGGHLDALGRGEMPGTLFRQAEQPLPARKHWMLHALPSAGRLTVDAGAADALRHEGASLLPSGIVAVEGRFARGDAVEIAVEKEGNRTRVAKGITQYGAADLERIQGRQSHAIAEVLDEAPADYVVHRDDLVVEA.

Lys15 serves as a coordination point for ATP. Positions 55, 141, and 153 each coordinate substrate. ATP contacts are provided by residues 173-174 and 215-221; these read SD and TGGMQTK. The PUA domain maps to 280–361; sequence AGRLTVDAGA…HAIAEVLDEA (82 aa).

The protein belongs to the glutamate 5-kinase family.

The protein resides in the cytoplasm. It carries out the reaction L-glutamate + ATP = L-glutamyl 5-phosphate + ADP. It functions in the pathway amino-acid biosynthesis; L-proline biosynthesis; L-glutamate 5-semialdehyde from L-glutamate: step 1/2. Its function is as follows. Catalyzes the transfer of a phosphate group to glutamate to form L-glutamate 5-phosphate. This chain is Glutamate 5-kinase, found in Salinibacter ruber (strain DSM 13855 / M31).